A 172-amino-acid polypeptide reads, in one-letter code: Large ribosomal subunit protein uL10 (172 aa).

It belongs to the universal ribosomal protein uL10 family. As to quaternary structure, part of the ribosomal stalk of the 50S ribosomal subunit. The N-terminus interacts with L11 and the large rRNA to form the base of the stalk. The C-terminus forms an elongated spine to which L12 dimers bind in a sequential fashion forming a multimeric L10(L12)X complex.

Functionally, forms part of the ribosomal stalk, playing a central role in the interaction of the ribosome with GTP-bound translation factors. The sequence is that of Large ribosomal subunit protein uL10 from Clostridium tetani (strain Massachusetts / E88).